The sequence spans 211 residues: Large ribosomal subunit protein uL4 (211 aa).

Positions 41-53 (QAHSRQGTASTLT) are enriched in polar residues. A disordered region spans residues 41-78 (QAHSRQGTASTLTRAEVRGGGRKPYKQKGTGRARQGTI). The span at 60-71 (GGRKPYKQKGTG) shows a compositional bias: basic residues.

The protein belongs to the universal ribosomal protein uL4 family. As to quaternary structure, part of the 50S ribosomal subunit.

One of the primary rRNA binding proteins, this protein initially binds near the 5'-end of the 23S rRNA. It is important during the early stages of 50S assembly. It makes multiple contacts with different domains of the 23S rRNA in the assembled 50S subunit and ribosome. Functionally, forms part of the polypeptide exit tunnel. The polypeptide is Large ribosomal subunit protein uL4 (Prochlorococcus marinus (strain MIT 9303)).